The primary structure comprises 165 residues: Large ribosomal subunit protein uL11 (165 aa).

R67 is subject to N5-methylarginine.

This sequence belongs to the universal ribosomal protein uL11 family. Component of the large ribosomal subunit (LSU). Mature N.crassa ribosomes consist of a small (40S) and a large (60S) subunit. The 40S small subunit contains 1 molecule of ribosomal RNA (18S rRNA) and at least 32 different proteins. The large 60S subunit contains 3 rRNA molecules (26S, 5.8S and 5S rRNA) and at least 42 different proteins.

The protein resides in the cytoplasm. Its function is as follows. Component of the ribosome, a large ribonucleoprotein complex responsible for the synthesis of proteins in the cell. The small ribosomal subunit (SSU) binds messenger RNAs (mRNAs) and translates the encoded message by selecting cognate aminoacyl-transfer RNA (tRNA) molecules. The large subunit (LSU) contains the ribosomal catalytic site termed the peptidyl transferase center (PTC), which catalyzes the formation of peptide bonds, thereby polymerizing the amino acids delivered by tRNAs into a polypeptide chain. The nascent polypeptides leave the ribosome through a tunnel in the LSU and interact with protein factors that function in enzymatic processing, targeting, and the membrane insertion of nascent chains at the exit of the ribosomal tunnel. The sequence is that of Large ribosomal subunit protein uL11 (rpl-12) from Neurospora crassa (strain ATCC 24698 / 74-OR23-1A / CBS 708.71 / DSM 1257 / FGSC 987).